The sequence spans 265 residues: Urease accessory protein UreH (265 aa).

Belongs to the UreD family. In terms of assembly, ureH, UreF and UreG form a complex that acts as a GTP-hydrolysis-dependent molecular chaperone, activating the urease apoprotein by helping to assemble the nickel containing metallocenter of UreC. The UreE protein probably delivers the nickel.

The protein localises to the cytoplasm. Required for maturation of urease via the functional incorporation of the urease nickel metallocenter. This chain is Urease accessory protein UreH, found in Helicobacter pylori (strain J99 / ATCC 700824) (Campylobacter pylori J99).